Here is a 270-residue protein sequence, read N- to C-terminus: (+)-cis,cis-nepetalactol synthase NEPS3 (270 aa).

Residues 21 to 27, 46 to 48, 70 to 71, Asn97, 165 to 169, and 198 to 202 each bind NAD(+); these read GGASGIG, DIQ, DV, YVMSK, and VATPL.

This sequence belongs to the short-chain dehydrogenases/reductases (SDR) family. In terms of assembly, forms homotetramers.

The catalysed reaction is (S)-8-oxocitronellyl enol = cis-cis-nepetalactol. Its function is as follows. Functions as a non-oxidoreductive cyclase to promote the formation of cis-cis-nepetalactol. Cis-cis-nepetalactol is then oxidized by NEPS1 into cis-cis-nepetalactone, which belongs to a family of metabolites that are both insect-repellent and have euphoric effect in cats. Binds NAD(+) as classical short-chain dehydrogenase/reductase (SDR), but does not utilize it for its redox-neutral cyclase activity. This chain is (+)-cis,cis-nepetalactol synthase NEPS3, found in Nepeta racemosa (Catmint).